We begin with the raw amino-acid sequence, 490 residues long: Phosphoethanolamine N-methyltransferase 3 (490 aa).

Residues Gly-60, Arg-65, Asp-81, Asp-106, Val-107, and Asn-125 each contribute to the S-adenosyl-L-homocysteine site. Residues Ser-158, Ser-163, Gly-164, Arg-168, and Tyr-175 each contribute to the phosphocholine site. Residues 244–245 (QY) and Tyr-253 contribute to the N-methylethanolamine phosphate site. A phosphocholine-binding site is contributed by Tyr-253. Positions 262, 263, 289, 311, 337, 338, and 354 each coordinate S-adenosyl-L-homocysteine. Phosphocholine-binding residues include Tyr-385, Tyr-399, Arg-403, Tyr-405, and Lys-471. N-methylethanolamine phosphate contacts are provided by residues Tyr-385, Tyr-399, 403–405 (RGY), and Lys-471.

This sequence belongs to the class I-like SAM-binding methyltransferase superfamily. PEAMT family. As to expression, expressed in root vasculature, shoots, rosettes leaves, cauline leaves, sepals, petals, anther filaments and ovules. Highly expressed in leaf vasculature.

Its subcellular location is the cytoplasm. The catalysed reaction is phosphoethanolamine + S-adenosyl-L-methionine = N-methylethanolamine phosphate + S-adenosyl-L-homocysteine + H(+). It catalyses the reaction N-methylethanolamine phosphate + S-adenosyl-L-methionine = N,N-dimethylethanolamine phosphate + S-adenosyl-L-homocysteine + H(+). The enzyme catalyses N,N-dimethylethanolamine phosphate + S-adenosyl-L-methionine = phosphocholine + S-adenosyl-L-homocysteine + H(+). The protein operates within phospholipid metabolism; phosphatidylcholine biosynthesis; phosphocholine from phosphoethanolamine: step 1/1. Involved in phosphocholine biosynthesis. Catalyzes the N-methylation of phosphoethanolamine, phosphomonomethylethanolamine and phosphodimethylethanolamine, the three methylation steps required to convert phosphoethanolamine to phosphocholine (PC). In association with NMT1, regulates PC homeostasis, phase transition at the shoot apex, coordinated organ development, and fertility. In associtation with NMT1, involved in phosphatidylcholine biosynthesis and vascular development. The protein is Phosphoethanolamine N-methyltransferase 3 of Arabidopsis thaliana (Mouse-ear cress).